A 600-amino-acid polypeptide reads, in one-letter code: Sulfite reductase [NADPH] flavoprotein alpha-component (600 aa).

Residues 63–201 (ITLISASQTG…AAQAWRQRVV (139 aa)) form the Flavodoxin-like domain. Residues 69-74 (SQTGNA), 116-119 (STQG), and 152-161 (LGDTSYEHFC) each bind FMN. An FAD-binding FR-type domain is found at 235–449 (ESPLTATLSV…IEHNDNFRLP (215 aa)). FAD-binding positions include threonine 323, alanine 357, 387–390 (RLYS), 405–407 (TVG), and 420–423 (GGAS). Residues 520-521 (SR), 526-530 (KIYVQ), and aspartate 562 each bind NADP(+). Tyrosine 600 lines the FAD pocket.

It belongs to the NADPH-dependent sulphite reductase flavoprotein subunit CysJ family. This sequence in the N-terminal section; belongs to the flavodoxin family. The protein in the C-terminal section; belongs to the flavoprotein pyridine nucleotide cytochrome reductase family. In terms of assembly, alpha(8)-beta(8). The alpha component is a flavoprotein, the beta component is a hemoprotein. FAD serves as cofactor. FMN is required as a cofactor.

The catalysed reaction is hydrogen sulfide + 3 NADP(+) + 3 H2O = sulfite + 3 NADPH + 4 H(+). The protein operates within sulfur metabolism; hydrogen sulfide biosynthesis; hydrogen sulfide from sulfite (NADPH route): step 1/1. Functionally, component of the sulfite reductase complex that catalyzes the 6-electron reduction of sulfite to sulfide. This is one of several activities required for the biosynthesis of L-cysteine from sulfate. The flavoprotein component catalyzes the electron flow from NADPH -&gt; FAD -&gt; FMN to the hemoprotein component. This is Sulfite reductase [NADPH] flavoprotein alpha-component from Cronobacter sakazakii (strain ATCC BAA-894) (Enterobacter sakazakii).